A 314-amino-acid polypeptide reads, in one-letter code: Ferrochelatase (314 aa).

H184 and E259 together coordinate Fe cation.

Belongs to the ferrochelatase family.

The protein localises to the cytoplasm. It carries out the reaction heme b + 2 H(+) = protoporphyrin IX + Fe(2+). It participates in porphyrin-containing compound metabolism; protoheme biosynthesis; protoheme from protoporphyrin-IX: step 1/1. Catalyzes the ferrous insertion into protoporphyrin IX. This is Ferrochelatase from Chlamydia trachomatis serovar L2 (strain ATCC VR-902B / DSM 19102 / 434/Bu).